Here is a 149-residue protein sequence, read N- to C-terminus: Nucleoside diphosphate kinase 1 (149 aa).

At methionine 1 the chain carries N-acetylmethionine. Residues lysine 9, phenylalanine 57, arginine 85, threonine 91, arginine 102, and asparagine 112 each coordinate ATP. Catalysis depends on histidine 115, which acts as the Pros-phosphohistidine intermediate.

Belongs to the NDK family. Interacts with CAT1, CAT2 and CAT3. Mg(2+) serves as cofactor.

It is found in the peroxisome. The protein resides in the nucleus. The protein localises to the cytoplasm. It carries out the reaction a 2'-deoxyribonucleoside 5'-diphosphate + ATP = a 2'-deoxyribonucleoside 5'-triphosphate + ADP. The enzyme catalyses a ribonucleoside 5'-diphosphate + ATP = a ribonucleoside 5'-triphosphate + ADP. In terms of biological role, major role in the synthesis of nucleoside triphosphates other than ATP. The ATP gamma phosphate is transferred to the NDP beta phosphate via a ping-pong mechanism, using a phosphorylated active-site intermediate. Plays a role in response to reactive oxygen species (ROS) stress. The chain is Nucleoside diphosphate kinase 1 (NDK1) from Arabidopsis thaliana (Mouse-ear cress).